A 185-amino-acid chain; its full sequence is Mu-like prophage FluMu protein gp16 (185 aa).

This sequence to phage Mu protein gp16.

This is Mu-like prophage FluMu protein gp16 from Haemophilus influenzae (strain ATCC 51907 / DSM 11121 / KW20 / Rd).